A 271-amino-acid chain; its full sequence is Chorismate dehydratase (271 aa).

The protein belongs to the MqnA/MqnD family. MqnA subfamily.

It catalyses the reaction chorismate = 3-[(1-carboxyvinyl)-oxy]benzoate + H2O. It participates in quinol/quinone metabolism; menaquinone biosynthesis. Its function is as follows. Catalyzes the dehydration of chorismate into 3-[(1-carboxyvinyl)oxy]benzoate, a step in the biosynthesis of menaquinone (MK, vitamin K2). The polypeptide is Chorismate dehydratase (Thermus thermophilus (strain ATCC 27634 / DSM 579 / HB8)).